Consider the following 358-residue polypeptide: Aurora kinase (358 aa).

Residues 1 to 49 (MENKATLARNIGEKRVSPRSKVNGTGKSWRISYSPQRMDGVSSGRNVSK) are disordered. Over residues 20 to 35 (SKVNGTGKSWRISYSP) the composition is skewed to polar residues. A Protein kinase domain is found at 100-358 (FEVGRKLGKG…PWILKNKPFW (259 aa)). ATP-binding positions include 106–114 (LGKGKFGKV) and Lys-129. Asp-223 functions as the Proton acceptor in the catalytic mechanism.

This sequence belongs to the protein kinase superfamily. Ser/Thr protein kinase family. Aurora subfamily.

The protein resides in the nucleus. It localises to the cytoplasm. Its subcellular location is the cytoskeleton. It is found in the spindle. The protein localises to the chromosome. The protein resides in the centromere. It localises to the kinetochore. It catalyses the reaction L-seryl-[protein] + ATP = O-phospho-L-seryl-[protein] + ADP + H(+). The enzyme catalyses L-threonyl-[protein] + ATP = O-phospho-L-threonyl-[protein] + ADP + H(+). In terms of biological role, component of the chromosomal passenger complex (CPC), a complex that acts as a key regulator of chromosome segregation and cytokinesis. Has a role in error-correction of aberrent kinetochore-microtubule attachments to ensure that sister kinetochores become bioriented and connect to opposite poles by promoting spindle assembly checkpoint signaling. The chain is Aurora kinase (IPL1) from Candida glabrata (strain ATCC 2001 / BCRC 20586 / JCM 3761 / NBRC 0622 / NRRL Y-65 / CBS 138) (Yeast).